The chain runs to 376 residues: 26S proteasome non-ATPase regulatory subunit 13 (376 aa).

Residues serine 171–proline 338 form the PCI domain.

Component of the 19S proteasome regulatory particle complex. The 26S proteasome consists of a 20S core particle (CP) and two 19S regulatory subunits (RP). The regulatory particle is made of a lid composed of 9 subunits including PSMD13, a base containing 6 ATPases and few additional components.

Component of the 26S proteasome, a multiprotein complex involved in the ATP-dependent degradation of ubiquitinated proteins. This complex plays a key role in the maintenance of protein homeostasis by removing misfolded or damaged proteins, which could impair cellular functions, and by removing proteins whose functions are no longer required. Therefore, the proteasome participates in numerous cellular processes, including cell cycle progression, apoptosis, or DNA damage repair. This is 26S proteasome non-ATPase regulatory subunit 13 from Gallus gallus (Chicken).